The chain runs to 65 residues: MPKIKTVRGAAKRFKKTANGGFKRKHANLRHILTKKATKRKRHLRPKGLVSKNDLGLVVACLPYA.

The protein belongs to the bacterial ribosomal protein bL35 family.

In Yersinia pseudotuberculosis serotype O:1b (strain IP 31758), this protein is Large ribosomal subunit protein bL35.